The primary structure comprises 191 residues: Gastrokine-3 (191 aa).

The N-terminal stretch at 1–30 (MPLHSLERDNMRRLIAPSILVTVFLVPALA) is a signal peptide. N33 carries an N-linked (GlcNAc...) asparagine glycan. The BRICHOS domain occupies 63–155 (NSVQSEWDGV…LCRAVPTYFA (93 aa)). A disulfide bond links C90 and C147.

Belongs to the gastrokine family. As to expression, expressed in stomach. Present in mucus cells at the base of antral glands, and Brunner glands of the duodenum. Present at lower levels in the mucus neck cell region of the fundus (at protein level).

It localises to the secreted. Inhibits gastric epithelial cell proliferation. This is Gastrokine-3 (Gkn3) from Mus musculus (Mouse).